Here is a 75-residue protein sequence, read N- to C-terminus: UPF0291 protein Teth39_0326 (75 aa).

It belongs to the UPF0291 family.

It localises to the cytoplasm. The chain is UPF0291 protein Teth39_0326 from Thermoanaerobacter pseudethanolicus (strain ATCC 33223 / 39E) (Clostridium thermohydrosulfuricum).